A 211-amino-acid chain; its full sequence is Protein-L-isoaspartate O-methyltransferase (211 aa).

Residue S60 is part of the active site.

It belongs to the methyltransferase superfamily. L-isoaspartyl/D-aspartyl protein methyltransferase family.

It localises to the cytoplasm. It carries out the reaction [protein]-L-isoaspartate + S-adenosyl-L-methionine = [protein]-L-isoaspartate alpha-methyl ester + S-adenosyl-L-homocysteine. Its function is as follows. Catalyzes the methyl esterification of L-isoaspartyl residues in peptides and proteins that result from spontaneous decomposition of normal L-aspartyl and L-asparaginyl residues. It plays a role in the repair and/or degradation of damaged proteins. The sequence is that of Protein-L-isoaspartate O-methyltransferase from Pseudomonas paraeruginosa (strain DSM 24068 / PA7) (Pseudomonas aeruginosa (strain PA7)).